A 130-amino-acid chain; its full sequence is Protein BLT4 (130 aa).

Positions 1–25 are cleaved as a signal peptide; that stretch reads MARTAATKLALVPLVAAMLLVAADA. The disordered stretch occupies residues 80-130; sequence VPARTTPAGPQASPPGAASASPTRSAPVSTALRSTDRTRAPHISSDRRLVG. Positions 84–110 are enriched in low complexity; sequence TTPAGPQASPPGAASASPTRSAPVSTA. A compositionally biased stretch (basic and acidic residues) spans 113–130; sequence STDRTRAPHISSDRRLVG.

This sequence belongs to the plant LTP family. As to expression, shoot meristem.

Its function is as follows. Possible dehydrative stress responsive protein. Not shown to have lipid transfer activity. This is Protein BLT4 (BLT4) from Hordeum vulgare (Barley).